We begin with the raw amino-acid sequence, 729 residues long: DNA gyrase subunit B, chloroplastic/mitochondrial (729 aa).

Residues 510 to 617 (SEIFIVEGDS…RYQKALFDEG (108 aa)) enclose the Toprim domain. E516, D590, and D592 together coordinate Mg(2+).

The protein belongs to the type II topoisomerase GyrB family. As to quaternary structure, made up of two chains. The A chain is responsible for DNA breakage and rejoining; the B chain catalyzes ATP hydrolysis. Requires Mg(2+) as cofactor. Mn(2+) serves as cofactor. Ca(2+) is required as a cofactor.

It is found in the plastid. The protein localises to the chloroplast. The protein resides in the mitochondrion. The catalysed reaction is ATP-dependent breakage, passage and rejoining of double-stranded DNA.. Functionally, a type II topoisomerase that negatively supercoils closed circular double-stranded DNA in an ATP-dependent manner. The polypeptide is DNA gyrase subunit B, chloroplastic/mitochondrial (GYRB) (Oryza sativa subsp. japonica (Rice)).